Here is a 415-residue protein sequence, read N- to C-terminus: Putative F-box protein At5g40050 (415 aa).

An F-box domain is found at 13-59 (IDSISPLPDELLSHILSFLPTKRAASTSILSKRWRTLFPLMNHLCAS).

The protein is Putative F-box protein At5g40050 of Arabidopsis thaliana (Mouse-ear cress).